The following is a 273-amino-acid chain: 3-methyl-2-oxobutanoate hydroxymethyltransferase (273 aa).

Mg(2+) is bound by residues Asp53 and Asp92. Residues 53 to 54, Asp92, and Lys122 each bind 3-methyl-2-oxobutanoate; that span reads DS. Residue Glu124 coordinates Mg(2+). Residue Glu191 is the Proton acceptor of the active site.

The protein belongs to the PanB family. Homodecamer; pentamer of dimers. It depends on Mg(2+) as a cofactor.

It localises to the cytoplasm. It carries out the reaction 3-methyl-2-oxobutanoate + (6R)-5,10-methylene-5,6,7,8-tetrahydrofolate + H2O = 2-dehydropantoate + (6S)-5,6,7,8-tetrahydrofolate. Its pathway is cofactor biosynthesis; (R)-pantothenate biosynthesis; (R)-pantoate from 3-methyl-2-oxobutanoate: step 1/2. In terms of biological role, catalyzes the reversible reaction in which hydroxymethyl group from 5,10-methylenetetrahydrofolate is transferred onto alpha-ketoisovalerate to form ketopantoate. The protein is 3-methyl-2-oxobutanoate hydroxymethyltransferase of Parabacteroides distasonis (strain ATCC 8503 / DSM 20701 / CIP 104284 / JCM 5825 / NCTC 11152).